A 638-amino-acid chain; its full sequence is Zona pellucida sperm-binding protein 1 (638 aa).

Residues Met-1–Gly-25 form the signal peptide. The Extracellular segment spans residues Arg-26–Pro-601. A glycan (N-linked (GlcNAc...) asparagine) is linked at Asn-76. Positions Leu-165–Ser-175 are enriched in polar residues. The disordered stretch occupies residues Leu-165–Leu-208. The region spanning Glu-234–Asn-274 is the P-type domain. 3 disulfide bridges follow: Cys-236–Cys-261, Cys-245–Cys-260, and Cys-255–Cys-270. Residues Gln-279–Gln-553 enclose the ZP domain. Asn-379 carries an N-linked (GlcNAc...) asparagine glycan. Cys-457 and Cys-478 form a disulfide bridge. Residues Gly-549–Asn-594 form a disordered region. The propeptide at Arg-554 to Gln-638 is removed in mature form. N-linked (GlcNAc...) asparagine glycosylation is found at Asn-561 and Asn-596. Residues Leu-602–Val-622 form a helical membrane-spanning segment. Residues Gly-623–Gln-638 are Cytoplasmic-facing.

This sequence belongs to the ZP domain family. ZPB subfamily. Polymers of ZP2 and ZP3 organized into long filaments cross-linked by ZP1 homodimers. Interacts with ZP3. Post-translationally, proteolytically cleaved before the transmembrane segment to yield the secreted ectodomain incorporated in the zona pellucida. In terms of processing, O-glycosylated. In terms of tissue distribution, expressed in oocytes (at protein level).

It is found in the zona pellucida. It localises to the cell membrane. Its function is as follows. Component of the zona pellucida, an extracellular matrix surrounding oocytes which mediates sperm binding, induction of the acrosome reaction and prevents post-fertilization polyspermy. The zona pellucida is composed of 3 to 4 glycoproteins, ZP1, ZP2, ZP3, and ZP4. ZP1 ensures the structural integrity of the zona pellucida. The protein is Zona pellucida sperm-binding protein 1 (ZP1) of Homo sapiens (Human).